A 268-amino-acid chain; its full sequence is 3-methyl-2-oxobutanoate hydroxymethyltransferase (268 aa).

Residues D46 and D85 each coordinate Mg(2+). Residues 46–47, D85, and K114 contribute to the 3-methyl-2-oxobutanoate site; that span reads DS. Position 116 (E116) interacts with Mg(2+). The active-site Proton acceptor is the E183.

This sequence belongs to the PanB family. Homodecamer; pentamer of dimers. It depends on Mg(2+) as a cofactor.

It is found in the cytoplasm. The catalysed reaction is 3-methyl-2-oxobutanoate + (6R)-5,10-methylene-5,6,7,8-tetrahydrofolate + H2O = 2-dehydropantoate + (6S)-5,6,7,8-tetrahydrofolate. It participates in cofactor biosynthesis; coenzyme A biosynthesis. In terms of biological role, catalyzes the reversible reaction in which hydroxymethyl group from 5,10-methylenetetrahydrofolate is transferred onto alpha-ketoisovalerate to form ketopantoate. The chain is 3-methyl-2-oxobutanoate hydroxymethyltransferase from Sulfolobus acidocaldarius (strain ATCC 33909 / DSM 639 / JCM 8929 / NBRC 15157 / NCIMB 11770).